The following is a 321-amino-acid chain: 4-hydroxy-3-methylbut-2-enyl diphosphate reductase (321 aa).

Cys12 contributes to the [4Fe-4S] cluster binding site. Positions 41 and 74 each coordinate (2E)-4-hydroxy-3-methylbut-2-enyl diphosphate. Dimethylallyl diphosphate contacts are provided by His41 and His74. Isopentenyl diphosphate contacts are provided by His41 and His74. A [4Fe-4S] cluster-binding site is contributed by Cys96. Position 124 (His124) interacts with (2E)-4-hydroxy-3-methylbut-2-enyl diphosphate. Residue His124 participates in dimethylallyl diphosphate binding. Residue His124 participates in isopentenyl diphosphate binding. Glu126 acts as the Proton donor in catalysis. Thr167 contacts (2E)-4-hydroxy-3-methylbut-2-enyl diphosphate. Cys197 provides a ligand contact to [4Fe-4S] cluster. (2E)-4-hydroxy-3-methylbut-2-enyl diphosphate is bound by residues Ser225, Ser226, Asn227, and Ser269. Ser225, Ser226, Asn227, and Ser269 together coordinate dimethylallyl diphosphate. Isopentenyl diphosphate contacts are provided by Ser225, Ser226, Asn227, and Ser269.

This sequence belongs to the IspH family. Homodimer. Requires [4Fe-4S] cluster as cofactor.

It catalyses the reaction isopentenyl diphosphate + 2 oxidized [2Fe-2S]-[ferredoxin] + H2O = (2E)-4-hydroxy-3-methylbut-2-enyl diphosphate + 2 reduced [2Fe-2S]-[ferredoxin] + 2 H(+). The catalysed reaction is dimethylallyl diphosphate + 2 oxidized [2Fe-2S]-[ferredoxin] + H2O = (2E)-4-hydroxy-3-methylbut-2-enyl diphosphate + 2 reduced [2Fe-2S]-[ferredoxin] + 2 H(+). The protein operates within isoprenoid biosynthesis; dimethylallyl diphosphate biosynthesis; dimethylallyl diphosphate from (2E)-4-hydroxy-3-methylbutenyl diphosphate: step 1/1. Its pathway is isoprenoid biosynthesis; isopentenyl diphosphate biosynthesis via DXP pathway; isopentenyl diphosphate from 1-deoxy-D-xylulose 5-phosphate: step 6/6. Its function is as follows. Catalyzes the conversion of 1-hydroxy-2-methyl-2-(E)-butenyl 4-diphosphate (HMBPP) into a mixture of isopentenyl diphosphate (IPP) and dimethylallyl diphosphate (DMAPP). Acts in the terminal step of the DOXP/MEP pathway for isoprenoid precursor biosynthesis. In Escherichia coli O6:K15:H31 (strain 536 / UPEC), this protein is 4-hydroxy-3-methylbut-2-enyl diphosphate reductase.